A 219-amino-acid chain; its full sequence is Protein DCL homolog, chloroplastic (219 aa).

A chloroplast-targeting transit peptide spans methionine 1–arginine 48. Residues leucine 70 to glutamate 96 are disordered. Over residues glutamate 79–glutamate 96 the composition is skewed to acidic residues.

As to expression, expressed in leaves, stems, flowers and siliques.

Its subcellular location is the plastid. The protein localises to the chloroplast. In terms of biological role, required for normal plastid function and plant development. Required for correct plastid ribosome assembly. Required for processing and maturation of 4.5S rRNA. This Arabidopsis thaliana (Mouse-ear cress) protein is Protein DCL homolog, chloroplastic.